Here is a 186-residue protein sequence, read N- to C-terminus: dCTP deaminase (186 aa).

107–112 (KSTYAR) is a binding site for dCTP. Residue Glu133 is the Proton donor/acceptor of the active site. The dCTP site is built by Gln152, Tyr166, and Gln176.

This sequence belongs to the dCTP deaminase family. As to quaternary structure, homotrimer.

It catalyses the reaction dCTP + H2O + H(+) = dUTP + NH4(+). It functions in the pathway pyrimidine metabolism; dUMP biosynthesis; dUMP from dCTP (dUTP route): step 1/2. Its function is as follows. Catalyzes the deamination of dCTP to dUTP. This chain is dCTP deaminase, found in Campylobacter jejuni subsp. doylei (strain ATCC BAA-1458 / RM4099 / 269.97).